A 288-amino-acid polypeptide reads, in one-letter code: Cyclin-dependent kinase 2 homolog (288 aa).

A Protein kinase domain is found at 4–284 (YHGLEKIGEG…AKEALQHAYF (281 aa)). ATP is bound by residues 10–18 (IGEGTYGVV) and Lys-32. Thr-14 bears the Phosphothreonine mark. Tyr-15 is subject to Phosphotyrosine. Residue Asp-125 is the Proton acceptor of the active site. Thr-158 is subject to Phosphothreonine.

It belongs to the protein kinase superfamily. CMGC Ser/Thr protein kinase family. CDC2/CDKX subfamily. May form a complex composed of at least the catalytic subunit CRK2 and a cyclin. It depends on Mg(2+) as a cofactor.

Its subcellular location is the cytoplasm. The catalysed reaction is L-seryl-[protein] + ATP = O-phospho-L-seryl-[protein] + ADP + H(+). It carries out the reaction L-threonyl-[protein] + ATP = O-phospho-L-threonyl-[protein] + ADP + H(+). It catalyses the reaction [DNA-directed RNA polymerase] + ATP = phospho-[DNA-directed RNA polymerase] + ADP + H(+). Its activity is regulated as follows. Phosphorylation at Thr-14 or Tyr-15 inactivates the enzyme, while phosphorylation at Thr-158 activates it. Serine/threonine-protein kinase. Involved in the control of the cell cycle. Required for entry into S-phase and mitosis. Probable component of the kinase complex that phosphorylates the repetitive C-terminus of RNA polymerase II. This chain is Cyclin-dependent kinase 2 homolog, found in Plasmodium knowlesi (strain H).